The sequence spans 69 residues: Putative membrane protein insertion efficiency factor (69 aa).

This sequence belongs to the UPF0161 family.

Its subcellular location is the cell membrane. Functionally, could be involved in insertion of integral membrane proteins into the membrane. The chain is Putative membrane protein insertion efficiency factor from Clostridium botulinum (strain Okra / Type B1).